Here is a 66-residue protein sequence, read N- to C-terminus: Moricin-1 (66 aa).

A signal peptide spans 1–24 (MNILKFFFVFIVAMSLVSCSTAAP).

As to expression, expressed in fat body and to a lesser extent in hemocyte and Malpighian tubules.

It localises to the secreted. Has antibacterial activity against Gram-positive and Gram-negative bacteria. Probably acts by disturbing membrane functions with its amphipathic structure. The sequence is that of Moricin-1 (MOR1) from Bombyx mori (Silk moth).